The chain runs to 334 residues: Glycerol-3-phosphate dehydrogenase [NAD(P)+] (334 aa).

Residues serine 11, tryptophan 12, arginine 32, and lysine 106 each contribute to the NADPH site. Residues lysine 106 and glycine 136 each contribute to the sn-glycerol 3-phosphate site. Alanine 140 is an NADPH binding site. Residues lysine 191, aspartate 244, serine 254, arginine 255, and asparagine 256 each coordinate sn-glycerol 3-phosphate. Lysine 191 functions as the Proton acceptor in the catalytic mechanism. Arginine 255 lines the NADPH pocket. Residues valine 279 and glutamate 281 each coordinate NADPH.

The protein belongs to the NAD-dependent glycerol-3-phosphate dehydrogenase family.

The protein resides in the cytoplasm. The enzyme catalyses sn-glycerol 3-phosphate + NAD(+) = dihydroxyacetone phosphate + NADH + H(+). The catalysed reaction is sn-glycerol 3-phosphate + NADP(+) = dihydroxyacetone phosphate + NADPH + H(+). It functions in the pathway membrane lipid metabolism; glycerophospholipid metabolism. In terms of biological role, catalyzes the reduction of the glycolytic intermediate dihydroxyacetone phosphate (DHAP) to sn-glycerol 3-phosphate (G3P), the key precursor for phospholipid synthesis. This is Glycerol-3-phosphate dehydrogenase [NAD(P)+] from Parafrankia sp. (strain EAN1pec).